The chain runs to 796 residues: Transcription factor kayak (796 aa).

Disordered regions lie at residues 109–132 (AYQQ…SNTS), 315–341 (VVNN…SNTV), 374–429 (FNCG…GSNG), and 442–490 (VGSA…RNKL). A compositionally biased stretch (low complexity) spans 402-429 (TTDTSSAATDSTSYQNGGHMFGNNGSNG). A compositionally biased stretch (polar residues) spans 447 to 457 (RGTSSTSNNAT). A bZIP domain is found at 478-541 (EEKRRVRRER…HQLNFVLEAH (64 aa)). Residues 480–499 (KRRVRRERNKLAAARCRKRR) form a basic motif region. Residues 506–534 (LSEEVDGLLKKNEDLKKEIEILTNTRHQL) form a leucine-zipper region. A disordered region spans residues 569 to 601 (SSGSNGSHHHNSNSNNSNNNNSNNNNNSNSNDS). A Phosphoserine modification is found at serine 621. 2 disordered regions span residues 642 to 661 (PHDA…PPAA) and 774 to 796 (SSQN…LVSL).

The protein belongs to the bZIP family. Fos subfamily. In terms of assembly, homodimer. Heterodimer with Jra. The kay-Jra heterodimer binds more stably to the AP-1 site than either of the two proteins alone.

It localises to the nucleus. Functionally, developmentally regulated transcription factor AP-1 binds and recognizes the enhancer DNA sequence: 5'-TGA[CG]TCA-3'. May play a role in the function or determination of a particular subset of cells in the developing embryo. It is able to carry out its function either independently of or in conjunction with Jra. The chain is Transcription factor kayak from Drosophila grimshawi (Hawaiian fruit fly).